Here is a 94-residue protein sequence, read N- to C-terminus: MKVFVVLLCLSLAAVYALEERLDKDADIMLDSPADMERAKDGDVEGPAGCKKYDVECDSGECCQKQYLWYKWRPLDCRCLKSGFFSSKCVCRDV.

The signal sequence occupies residues 1-17; that stretch reads MKVFVVLLCLSLAAVYA. Positions 18–38 are excised as a propeptide; that stretch reads LEERLDKDADIMLDSPADMER. 4 disulfides stabilise this stretch: Cys50–Cys63, Cys57–Cys77, Cys62–Cys91, and Cys79–Cys89.

The protein belongs to the neurotoxin 26 (DTX) family. In terms of tissue distribution, expressed by the venom gland.

The protein resides in the secreted. Its function is as follows. Insecticidal toxin. This toxin promotes opening of insect Nav channels. The toxin binds to the S1-S2 and S3-S4 loops in the domain II voltage-sensor of insect Nav channels (i.e., receptor site 4). The American cockroach P.americana is largely resistant to the effects of this toxin due to an unusual sequence within the domain II S1-S2 loop. In vivo, paralyzes lepidopteran and dipteran larvae. Paralyzed insects ultimately die from secondary effects of starvation and dehydration. The sequence is that of Beta-diguetoxin-Dc1a from Diguetia canities (Desert bush spider).